A 139-amino-acid polypeptide reads, in one-letter code: Putative nickel-responsive regulator (139 aa).

Ni(2+) contacts are provided by H79, H90, H92, and C98.

The protein belongs to the transcriptional regulatory CopG/NikR family. Ni(2+) is required as a cofactor.

Functionally, transcriptional regulator. This Solibacter usitatus (strain Ellin6076) protein is Putative nickel-responsive regulator.